We begin with the raw amino-acid sequence, 551 residues long: MANMVVTGEQLDKSIREVVRILEDAVGCTAGPKGLTVAISKPYGAPEVTKDGYKVMKSIKPEDPLALAIANIIAQSASQCNDKVGDGTTTCSILTAKVIEEVSKVKAAGADIICVREGVLKAKEAVLEALKCMKREVLSEEEIAQVATISANGDKNIGTKIAQCVKEVGKDGVITVEESKGFKELDVEKTDGMQFDRGYLSPYFVTNSEKMLVEFENPYILLTEKKLNIIQPLLPILENIARSGRPLLIIAEDVEGEALSTLVLNKLRGGLHVAAVKAPGFGDRRKDMLGDIAILTGAKHVINDELAIKMEDLTLCDLGTAKNIRITKDTTTIIGSVDNSCAHVQSRICQIRMQIDNSTSDYDKEKLQERLAKLSGGVAVLKVGGSSEVEVKERKDRVEDALHATRAAVEEGVVPGGGAALLYTLSALDNLKSKNDDEQLGINIVKRALQAPIKRIIKNAGSENAPCVIAHLLKQNDKELIFNVDVMNFANAFTSGVIDPLKVVRIAFDFAVSLAAVFMTLNAIVVDIPSKDDNSAAGGAGMGGMGGMGGF.

ATP contacts are provided by residues 29-32, lysine 50, 86-90, glycine 417, and aspartate 499; these read TAGP and DGTTT.

This sequence belongs to the chaperonin (HSP60) family. As to quaternary structure, forms a cylinder of 14 subunits composed of two heptameric rings stacked back-to-back. Interacts with the co-chaperonin GroES.

Its subcellular location is the cytoplasm. The enzyme catalyses ATP + H2O + a folded polypeptide = ADP + phosphate + an unfolded polypeptide.. Together with its co-chaperonin GroES, plays an essential role in assisting protein folding. The GroEL-GroES system forms a nano-cage that allows encapsulation of the non-native substrate proteins and provides a physical environment optimized to promote and accelerate protein folding. The chain is Chaperonin GroEL from Ehrlichia ruminantium (strain Gardel).